Reading from the N-terminus, the 248-residue chain is Peptidyl-tRNA hydrolase (248 aa).

Tyr14 serves as a coordination point for tRNA. His19 acts as the Proton acceptor in catalysis. The tRNA site is built by Phe64, Asn66, and Asn112. A disordered region spans residues 190 to 248 (PRSSTGEASKGRKKAQKSEPGVAKTPAKAATPEAPAAGDIPAAPEDSRSPMQKLLDKFK). The segment covering 212 to 226 (AKTPAKAATPEAPAA) has biased composition (low complexity).

It belongs to the PTH family. In terms of assembly, monomer.

The protein resides in the cytoplasm. The enzyme catalyses an N-acyl-L-alpha-aminoacyl-tRNA + H2O = an N-acyl-L-amino acid + a tRNA + H(+). Functionally, hydrolyzes ribosome-free peptidyl-tRNAs (with 1 or more amino acids incorporated), which drop off the ribosome during protein synthesis, or as a result of ribosome stalling. Its function is as follows. Catalyzes the release of premature peptidyl moieties from peptidyl-tRNA molecules trapped in stalled 50S ribosomal subunits, and thus maintains levels of free tRNAs and 50S ribosomes. The sequence is that of Peptidyl-tRNA hydrolase from Ruegeria sp. (strain TM1040) (Silicibacter sp.).